A 488-amino-acid polypeptide reads, in one-letter code: Transcriptional coactivator YAP1 (488 aa).

The span at methionine 1–valine 21 shows a compositional bias: pro residues. A disordered region spans residues methionine 1–glutamate 47. At serine 46 the chain carries Phosphoserine. The residue at position 48 (threonine 48) is a Phosphothreonine. Residues methionine 71 to glutamate 85 adopt a coiled-coil conformation. Lysine 75 carries the post-translational modification N6-lactoyllysine. A disordered region spans residues leucine 76 to threonine 99. 2 positions are modified to phosphoserine: serine 90 and serine 94. Phosphothreonine is present on threonine 95. The residue at position 104 (threonine 104) is a Phosphothreonine; by MAPK8 and MAPK9. Serine 112, serine 113, serine 116, and serine 123 each carry phosphoserine. Serine 149 is subject to Phosphoserine; by LATS1 and LATS2. WW domains are found at residues valine 156–lysine 189 and glycine 215–leucine 248. Disordered regions lie at residues serine 261 to leucine 293 and threonine 339 to serine 393. At serine 274 the chain carries Phosphoserine. Positions glutamine 276–leucine 488 are transactivation domain. A coiled-coil region spans residues glycine 283 to glycine 344. The segment covering asparagine 348–tyrosine 376 has biased composition (polar residues). Phosphoserine; by MAPK8 and MAPK9 is present on serine 352. A phosphoserine mark is found at serine 356, serine 366, serine 367, and serine 373. Position 382 is a phosphoserine; by LATS1 and LATS2 (serine 382). Residues aspartate 384 to serine 393 show a composition bias toward polar residues. Serine 385 and serine 388 each carry phosphoserine; by CK1. Tyrosine 392 carries the phosphotyrosine; by ABL1 modification. Threonine 397 bears the Phosphothreonine; by MAPK8 and MAPK9 mark.

This sequence belongs to the YAP1 family. As to quaternary structure, part of a complex when phosphorylated that contains DSG3, PKP1, YAP1 and YWHAG; the complex is required for localization of DSG3 and YAP1 to the cell membrane in keratinocytes. Binds to the SH3 domain of the YES kinase. Binds to WBP1 and WBP2. Binds, in vitro, through the WW1 domain, to neural isoforms of ENAH that contain the PPSY motif. The phosphorylated form interacts with YWHAB. Interacts (via WW domains) with LATS1 (via PPxY motif 2). Interacts with LATS2. Interacts (via WW domain 1) with isoform JM-A of ERBB4 (via PPxY motif 2). Interacts with TEAD1, TEAD2 and TEAD3. Interacts with TP73 and HCK. Interacts with RUNX1. Interacts with TEAD4. Interacts (via WW domains) with PTPN14 (via PPxY motif 2); this interaction leads to the cytoplasmic sequestration of YAP1 and inhibits its transcriptional coactivator activity. Interacts (when phosphorylated at Ser-112) with SMAD2, SMAD3 and WWTR1. Interacts with PRRG2 (via cytoplasmic domain). Interacts (via WW domains) with PRRG4 (via cytoplasmic domain). Interacts (phosphorylated) with CLDN18; the interaction sequesters YAP1 away from the nucleus and thereby restricts transcription of YAP1 target genes. Interacts with SMAD1. Interacts with AMOT; the interaction facilitates translocation of YAP1 to the cytoplasm and tight junctions. Interacts with AMOTL2, the interaction is required for ubiquitination of AMOTL2 and localization of YAP1 to tight junctions. In terms of processing, phosphorylated by LATS1 and LATS2; leading to cytoplasmic translocation and inactivation. Phosphorylated by ABL1; leading to YAP1 stabilization, enhanced interaction with TP73 and recruitment onto proapoptotic genes; in response to DNA damage. Phosphorylation at Ser-385 and Ser-388 by CK1 is triggered by previous phosphorylation at Ser-382 by LATS proteins and leads to YAP1 ubiquitination by SCF(beta-TRCP) E3 ubiquitin ligase and subsequent degradation. Phosphorylated at Thr-104, Ser-123, Ser-352 and Thr-397 by MAPK8/JNK1 and MAPK9/JNK2, which is required for the regulation of apoptosis by YAP1. Post-translationally, lactylation by AARS1 promotes nuclear localization and stabilization of YAP1, leading to increased Hippo signaling pathway. Delactylated by SIRT1. Ubiquitinated by SCF(beta-TRCP) E3 ubiquitin ligase. In terms of tissue distribution, isoforms lacking the transactivation domain seen in striatal neurons (at protein level). Ubiquitous. Isoform 2 is expressed at higher levels in the neural tissues. In the embryo, it is expressed in brain, eye, and the maxillary and frontonasal components of the primary palate.

Its subcellular location is the cytoplasm. The protein resides in the nucleus. It localises to the cell junction. It is found in the tight junction. The protein localises to the cell membrane. Its function is as follows. Transcriptional regulator with dual roles as a coactivator and corepressor. Critical downstream regulatory target in the Hippo signaling pathway, crucial for organ size control and tumor suppression by restricting proliferation and promoting apoptosis. The Hippo signaling pathway core involves a kinase cascade featuring STK3/MST2 and STK4/MST1, along with its regulatory partner SAV1, which phosphorylates and activates LATS1/2 in complex with their regulatory protein, MOB1. This activation leads to the phosphorylation and inactivation of the YAP1 oncoprotein and WWTR1/TAZ. Phosphorylation of YAP1 by LATS1/2 prevents its nuclear translocation, thereby regulating the expression of its target genes. The transcriptional regulation of gene expression requires TEAD transcription factors and modulates cell growth, anchorage-independent growth, and induction of epithelial-mesenchymal transition (EMT). Plays a key role in tissue tension and 3D tissue shape by regulating the cortical actomyosin network, acting via ARHGAP18, a Rho GTPase activating protein that suppresses F-actin polymerization. It also suppresses ciliogenesis by acting as a transcriptional corepressor of TEAD4 target genes AURKA and PLK1. In conjunction with WWTR1, regulates TGFB1-dependent SMAD2 and SMAD3 nuclear accumulation. Synergizes with WBP2 to enhance PGR activity. The sequence is that of Transcriptional coactivator YAP1 (Yap1) from Mus musculus (Mouse).